The sequence spans 339 residues: MQGRLEDGVVHLPGDARQRFHDSRGYGRPTGGDDLEVAPVEAAHLLSRDDIDGVDGMGLRELLARTGTTLDFVVYKDLRDRGFYLSPAREGWPGVADAADADFLVYPRGKGPWDGEVEHRVRVVGERESIPVSSLGEVVLAIVDEDGDLTYFDTEGDDPEGTAAEDLPADLDAELLSDRALVWDGVDRLYQRGFFGQRLYGRNADSGPLQLSLLEAAYLARADALAIDEADVVSRGRDVEGDRFDRRLAVYAALREAKTVPKSGFKFGSDFRVYTEFESVDDLSHSEFLVRVVAPDHTFVPRDLSLDVRLAGGVRKRMVFALTDDNGEIDWLSVSRLTP.

Active-site residues include Y274, H285, and K316.

Belongs to the tRNA-intron endonuclease family. Archaeal long subfamily. As to quaternary structure, homodimer. Requires Ca(2+) as cofactor. It depends on Mg(2+) as a cofactor. Post-translationally, the N-terminus is blocked.

It carries out the reaction pretRNA = a 3'-half-tRNA molecule with a 5'-OH end + a 5'-half-tRNA molecule with a 2',3'-cyclic phosphate end + an intron with a 2',3'-cyclic phosphate and a 5'-hydroxyl terminus.. In terms of biological role, endonuclease that removes tRNA introns. Cleaves pre-tRNA at the 5'- and 3'-splice sites to release the intron. The products are an intron and two tRNA half-molecules bearing 2',3' cyclic phosphate and 5'-OH termini. Recognizes a pseudosymmetric substrate in which 2 bulged loops of 3 bases are separated by a stem of 4 bp. The chain is tRNA-splicing endonuclease from Haloferax volcanii (strain ATCC 29605 / DSM 3757 / JCM 8879 / NBRC 14742 / NCIMB 2012 / VKM B-1768 / DS2) (Halobacterium volcanii).